The sequence spans 121 residues: Acidic phospholipase A2 PLA-2 (121 aa).

7 disulfide bridges follow: Cys26–Cys115, Cys28–Cys44, Cys43–Cys95, Cys49–Cys121, Cys50–Cys88, Cys57–Cys81, and Cys75–Cys86. Ca(2+) is bound by residues Tyr27, Gly29, and Gly31. His47 is an active-site residue. Asp48 lines the Ca(2+) pocket. The active site involves Asp89.

This sequence belongs to the phospholipase A2 family. Group II subfamily. D49 sub-subfamily. The cofactor is Ca(2+). Expressed by the venom gland.

The protein resides in the secreted. It carries out the reaction a 1,2-diacyl-sn-glycero-3-phosphocholine + H2O = a 1-acyl-sn-glycero-3-phosphocholine + a fatty acid + H(+). Functionally, PLA2 catalyzes the calcium-dependent hydrolysis of the 2-acyl groups in 3-sn-phosphoglycerides. This Eristicophis macmahoni (Leaf-nosed viper) protein is Acidic phospholipase A2 PLA-2.